A 201-amino-acid polypeptide reads, in one-letter code: Recombination protein RecR (201 aa).

The segment at 60 to 75 (CATCGNFDTVQPCAVC) adopts a C4-type zinc-finger fold. The Toprim domain maps to 83–178 (GIICVVEDVP…DVTRLAHGVP (96 aa)).

It belongs to the RecR family.

Its function is as follows. May play a role in DNA repair. It seems to be involved in an RecBC-independent recombinational process of DNA repair. It may act with RecF and RecO. This chain is Recombination protein RecR, found in Hyphomonas neptunium (strain ATCC 15444).